The chain runs to 311 residues: Olfactory receptor 2A5 (311 aa).

The Extracellular segment spans residues 1-24; sequence MTKNQTWVTEFILLGFPLSLRIQM. N4 carries an N-linked (GlcNAc...) asparagine glycan. Residues 25–48 traverse the membrane as a helical segment; it reads LLSGLFSLLYVFTLLGNGAILGLI. Over 49–56 the chain is Cytoplasmic; sequence WLDSRLHT. Residues 57-78 traverse the membrane as a helical segment; that stretch reads PMYFFLSHLAIIDISYASNNVP. The Extracellular segment spans residues 79 to 100; the sequence is KMLTNLGLNKRKTISFVPCTMQ. C97 and C189 are joined by a disulfide. Residues 101 to 120 form a helical membrane-spanning segment; the sequence is TFLYMAFAHTECLILVMMSY. The Cytoplasmic segment spans residues 121–139; the sequence is DRYMAICHPLQYSVIMRWG. Residues 140-158 form a helical membrane-spanning segment; sequence VCTVLAVTSWACGSLLALV. Topologically, residues 159 to 196 are extracellular; sequence HVVLILRLPFCGPHEINHFFCEILSVLKLACADTWLNQ. The chain crosses the membrane as a helical span at residues 197 to 219; the sequence is VVIFAASVFILVGPLCLVLVSYS. The Cytoplasmic portion of the chain corresponds to 220 to 236; it reads RILAAILRIQSGEGRRK. Residues 237-259 form a helical membrane-spanning segment; sequence AFSTCSSHLCMVGLFFGSAIVMY. Residues 260-272 are Extracellular-facing; that stretch reads MAPKSRHPEEQQK. A helical transmembrane segment spans residues 273–292; sequence VLSLFYSLFNPMLNPLIYSL. Residues 293–311 are Cytoplasmic-facing; sequence RNAEVKGALKRVLWKQRSK.

The protein belongs to the G-protein coupled receptor 1 family.

It is found in the cell membrane. Its function is as follows. Odorant receptor. This is Olfactory receptor 2A5 (OR2A5) from Homo sapiens (Human).